A 481-amino-acid polypeptide reads, in one-letter code: Protein nucleotidyltransferase YdiU (481 aa).

The ATP site is built by Gly85, Gly87, Arg88, Lys108, Asp120, Gly121, Arg172, and Arg179. Asp248 functions as the Proton acceptor in the catalytic mechanism. The Mg(2+) site is built by Asn249 and Asp258. Asp258 serves as a coordination point for ATP.

This sequence belongs to the SELO family. Mg(2+) serves as cofactor. Requires Mn(2+) as cofactor.

It catalyses the reaction L-seryl-[protein] + ATP = 3-O-(5'-adenylyl)-L-seryl-[protein] + diphosphate. The catalysed reaction is L-threonyl-[protein] + ATP = 3-O-(5'-adenylyl)-L-threonyl-[protein] + diphosphate. It carries out the reaction L-tyrosyl-[protein] + ATP = O-(5'-adenylyl)-L-tyrosyl-[protein] + diphosphate. The enzyme catalyses L-histidyl-[protein] + UTP = N(tele)-(5'-uridylyl)-L-histidyl-[protein] + diphosphate. It catalyses the reaction L-seryl-[protein] + UTP = O-(5'-uridylyl)-L-seryl-[protein] + diphosphate. The catalysed reaction is L-tyrosyl-[protein] + UTP = O-(5'-uridylyl)-L-tyrosyl-[protein] + diphosphate. Nucleotidyltransferase involved in the post-translational modification of proteins. It can catalyze the addition of adenosine monophosphate (AMP) or uridine monophosphate (UMP) to a protein, resulting in modifications known as AMPylation and UMPylation. The sequence is that of Protein nucleotidyltransferase YdiU from Cereibacter sphaeroides (strain KD131 / KCTC 12085) (Rhodobacter sphaeroides).